The chain runs to 213 residues: Thiamine-phosphate synthase (213 aa).

4-amino-2-methyl-5-(diphosphooxymethyl)pyrimidine-binding positions include 40–44 and asparagine 72; that span reads QYRDK. Mg(2+) is bound by residues aspartate 73 and aspartate 91. A 4-amino-2-methyl-5-(diphosphooxymethyl)pyrimidine-binding site is contributed by threonine 110. Residue 137-139 coordinates 2-[(2R,5Z)-2-carboxy-4-methylthiazol-5(2H)-ylidene]ethyl phosphate; the sequence is SHT. A 4-amino-2-methyl-5-(diphosphooxymethyl)pyrimidine-binding site is contributed by lysine 140. Position 167 (glycine 167) interacts with 2-[(2R,5Z)-2-carboxy-4-methylthiazol-5(2H)-ylidene]ethyl phosphate.

The protein belongs to the thiamine-phosphate synthase family. It depends on Mg(2+) as a cofactor.

It carries out the reaction 2-[(2R,5Z)-2-carboxy-4-methylthiazol-5(2H)-ylidene]ethyl phosphate + 4-amino-2-methyl-5-(diphosphooxymethyl)pyrimidine + 2 H(+) = thiamine phosphate + CO2 + diphosphate. The enzyme catalyses 2-(2-carboxy-4-methylthiazol-5-yl)ethyl phosphate + 4-amino-2-methyl-5-(diphosphooxymethyl)pyrimidine + 2 H(+) = thiamine phosphate + CO2 + diphosphate. It catalyses the reaction 4-methyl-5-(2-phosphooxyethyl)-thiazole + 4-amino-2-methyl-5-(diphosphooxymethyl)pyrimidine + H(+) = thiamine phosphate + diphosphate. It functions in the pathway cofactor biosynthesis; thiamine diphosphate biosynthesis; thiamine phosphate from 4-amino-2-methyl-5-diphosphomethylpyrimidine and 4-methyl-5-(2-phosphoethyl)-thiazole: step 1/1. In terms of biological role, condenses 4-methyl-5-(beta-hydroxyethyl)thiazole monophosphate (THZ-P) and 2-methyl-4-amino-5-hydroxymethyl pyrimidine pyrophosphate (HMP-PP) to form thiamine monophosphate (TMP). The chain is Thiamine-phosphate synthase from Stutzerimonas stutzeri (strain A1501) (Pseudomonas stutzeri).